Here is a 698-residue protein sequence, read N- to C-terminus: DNA ligase (698 aa).

Residues 47 to 51, 96 to 97, and E128 each bind NAD(+); these read DAQYD and SL. K130 acts as the N6-AMP-lysine intermediate in catalysis. Positions 151, 186, 303, and 327 each coordinate NAD(+). Residues C422, C425, C440, and C446 each contribute to the Zn(2+) site. Residues 620–698 form the BRCT domain; sequence GDNLLLSNQT…EEEWIKMVNE (79 aa).

Belongs to the NAD-dependent DNA ligase family. LigA subfamily. Mg(2+) serves as cofactor. It depends on Mn(2+) as a cofactor.

The catalysed reaction is NAD(+) + (deoxyribonucleotide)n-3'-hydroxyl + 5'-phospho-(deoxyribonucleotide)m = (deoxyribonucleotide)n+m + AMP + beta-nicotinamide D-nucleotide.. Functionally, DNA ligase that catalyzes the formation of phosphodiester linkages between 5'-phosphoryl and 3'-hydroxyl groups in double-stranded DNA using NAD as a coenzyme and as the energy source for the reaction. It is essential for DNA replication and repair of damaged DNA. This chain is DNA ligase, found in Orientia tsutsugamushi (strain Boryong) (Rickettsia tsutsugamushi).